A 917-amino-acid chain; its full sequence is Intercellular adhesion molecule 5 (917 aa).

The N-terminal stretch at 1–31 is a signal peptide; that stretch reads MPGPSPGLRRALLGLWAALGLGILGISAVAL. The Extracellular segment spans residues 32 to 833; it reads EPFWADLQPR…RITVRVAGPW (802 aa). Ig-like C2-type domains follow at residues 48 to 130, 135 to 235, 242 to 329, 337 to 402, 408 to 486, 491 to 567, 572 to 651, 665 to 738, and 745 to 828; these read GGSL…PLPS, GENF…SLIA, DSER…LLTL, GKMV…SSEL, PRLD…VTLT, PALD…VAVT, PSFE…NRHG, PQMD…RTVT, and PVVA…ITVR. Asparagine 54 carries an N-linked (GlcNAc...) (high mannose) asparagine glycan. Cystine bridges form between cysteine 55–cysteine 99 and cysteine 59–cysteine 103. N-linked (GlcNAc...) asparagine glycans are attached at residues asparagine 74 and asparagine 137. A disulfide bridge links cysteine 142 with cysteine 198. Threonine 182 carries the phosphothreonine modification. N-linked (GlcNAc...) asparagine glycans are attached at residues asparagine 195, asparagine 214, asparagine 274, asparagine 316, asparagine 371, and asparagine 397. A disulfide bond links cysteine 249 and cysteine 302. Cysteine 344 and cysteine 383 are joined by a disulfide. 3 disulfides stabilise this stretch: cysteine 415–cysteine 470, cysteine 498–cysteine 551, and cysteine 579–cysteine 644. Residues asparagine 582 and asparagine 645 are each glycosylated (N-linked (GlcNAc...) asparagine). The cysteines at positions 672 and 724 are disulfide-linked. Residues asparagine 762, asparagine 793, and asparagine 794 are each glycosylated (N-linked (GlcNAc...) asparagine). Cysteine 767 and cysteine 812 are disulfide-bonded. Residues 834–854 traverse the membrane as a helical segment; sequence LWVAVGGAAGGAALLAAGAGL. Topologically, residues 855-917 are cytoplasmic; that stretch reads AFYVQSTACK…EVFAIQLTSS (63 aa). Residues 884–893 are compositionally biased toward gly residues; that stretch reads GAGGTPGAEG. The tract at residues 884 to 908 is disordered; sequence GAGGTPGAEGGAETPGTAESPADGE.

This sequence belongs to the immunoglobulin superfamily. ICAM family. Glycosylation at Asn-54 is critical for functional folding. In terms of tissue distribution, expressed on neurons in the most rostral segment of the mammalian brain, the telencephalon.

It localises to the membrane. ICAM proteins are ligands for the leukocyte adhesion protein LFA-1 (integrin alpha-L/beta-2). The chain is Intercellular adhesion molecule 5 (Icam5) from Mus musculus (Mouse).